Here is a 144-residue protein sequence, read N- to C-terminus: Peptidyl-Asp metalloendopeptidase (144 aa).

Histidine 64 provides a ligand contact to Zn(2+). Glutamate 65 is an active-site residue. Histidine 68 serves as a coordination point for Zn(2+).

It belongs to the peptidase M72 family. Zn(2+) is required as a cofactor.

It carries out the reaction Cleavage of Xaa-|-Asp, Xaa-|-Glu and Xaa-|-cysteic acid bonds.. Metalloprotease, specifically cleaves on the N-terminal side of aspartyl, glutamyl and cysteic acid residues. The polypeptide is Peptidyl-Asp metalloendopeptidase (Pseudomonas fragi).